The following is a 791-amino-acid chain: MTAEFDEEVVFENSPLFQYLQDLGQTDFEICPLSKEEEHLAGNGHGEQDVHTTEKKSNISRTVEFLKSWSPLFSKKKRDEKICLLENGFRLESLRTILQQEVLIQEDVELIELLDPGILSAGQTQNQQNGHLPTLWSIATPNIWEMSVLFAFLSALAALQSWSISSSLVWGPSLILFAAFTVLRALHTWRSATLRMILRKYCNQVEGTVLNSRAFTNLVRKALRLIQETEVISRGFTLLLDRVSAACPYGKAGQHASQHLLGLRKAVYRTVRTNFRISRLATLYMLKHYPLNSEIDNVTNYICVVPLKDLGLGLCEEHVSEEEAHNLTDAFSLPALKVLFQLWIGQSSEFFRRLALLLSPENAAQGHLASPEQLPHLIWSDVVQDLPHTQAACLAELKRSYEFYRYFETQHQSGFERTAKRKKEVGELSNLHGAVRSLQLHLKALLNEVIILEDELEKLSSCKEMQAMTQEASLMLEEKLRIIQPHVQASNTCWEEALCQVGRMVRRPAAKKDIEKSSCENLNFPVVSNMPPALRIEDRDPVPEEQILEAYVEEAVTDQEFNSEDIYLFSPEERERQKREREESKRVLQELKAVLGLKASEAERQKWKQLLFSEHAVITPFLPEEPVGHFEPPDSVYPEDPCKNLGFYGEFTSEINGTEHAKDTPNQGDLQMNMNHEDEAKICPLSEEAEPESGKDENESPCPVPRTVLPPAIKERLARIHQTSDLNFTSGLAAQVAARSLTFTFLQEQTFGDEWDDDDDDNDNDDDNYDQVKNVESHEKERNNVSLQLEE.

2 consecutive transmembrane segments (helical) span residues 138-158 and 163-183; these read IATPNIWEMSVLFAFLSALAA and SISSSLVWGPSLILFAAFTVL. A coiled-coil region spans residues 435 to 464; it reads VRSLQLHLKALLNEVIILEDELEKLSSCKE. Residues 752 to 769 are compositionally biased toward acidic residues; that stretch reads GDEWDDDDDDNDNDDDNY. Positions 752–791 are disordered; it reads GDEWDDDDDDNDNDDDNYDQVKNVESHEKERNNVSLQLEE. A compositionally biased stretch (basic and acidic residues) spans 773–783; the sequence is KNVESHEKERN.

It belongs to the vezatin family. As to quaternary structure, interacts with myosin VIIa and the cadherin-catenins complex.

It is found in the cell membrane. The protein localises to the cell junction. It localises to the adherens junction. The protein resides in the nucleus. Its function is as follows. Plays a pivotal role in the establishment of adherens junctions and their maintenance in adult life. This Xenopus tropicalis (Western clawed frog) protein is Vezatin (vezt).